Reading from the N-terminus, the 2053-residue chain is Cell adhesion molecule DSCAML1 (2053 aa).

An N-terminal signal peptide occupies residues 1 to 18 (MWLVTFLLLLDSLHKARP). 9 Ig-like C2-type domains span residues 19–119 (EDVG…NIRV), 115–217 (PNIR…ARLS), 226–306 (PTIL…AEAT), 314–402 (PLHV…AIIA), 408–501 (PRIV…ARIN), 506–586 (PSIR…LSIS), 596–685 (PPLI…RQLI), 690–784 (PRFV…MFLT), and 788–885 (PAMI…LTVQ). At 19–1591 (EDVGTSLYFV…AQGEGDDVKK (1573 aa)) the chain is on the extracellular side. N-linked (GlcNAc...) asparagine glycans are attached at residues Asn-29 and Asn-79. 5 disulfides stabilise this stretch: Cys-47-Cys-103, Cys-146-Cys-198, Cys-247-Cys-294, Cys-336-Cys-386, and Cys-429-Cys-485. Asn-368, Asn-471, Asn-513, Asn-556, Asn-666, Asn-710, Asn-749, Asn-796, and Asn-809 each carry an N-linked (GlcNAc...) asparagine glycan. 2 disulfides stabilise this stretch: Cys-526/Cys-575 and Cys-617/Cys-669. A disulfide bridge connects residues Cys-711 and Cys-767. A disulfide bridge connects residues Cys-810 and Cys-867. 4 consecutive Fibronectin type-III domains span residues 887–984 (PPDP…TEEA), 989–1088 (PPMD…TLED), 1093–1189 (PPEN…TKED), and 1193–1288 (PPAG…AGKA). N-linked (GlcNAc...) asparagine glycosylation is found at Asn-926, Asn-1082, Asn-1144, Asn-1162, Asn-1275, and Asn-1345. The region spanning 1278-1377 (EKVTIEPAGK…TGGFDTIIVN (100 aa)) is the Ig-like C2-type 10 domain. A disulfide bond links Cys-1311 and Cys-1363. 2 Fibronectin type-III domains span residues 1383–1477 (PPDQ…THGR) and 1478–1578 (EPSF…TIPP). Residues Asn-1492, Asn-1531, and Asn-1561 are each glycosylated (N-linked (GlcNAc...) asparagine). A helical membrane pass occupies residues 1592-1612 (LFTIGCPVILATLGVALLFIV). The Cytoplasmic portion of the chain corresponds to 1613–2053 (RKKRKEKRLK…GAYSKSYTLV (441 aa)). Disordered regions lie at residues 1715–1741 (PLID…HSTR), 1773–1803 (HGVT…STES), 1840–1862 (SSDQ…STPS), and 1974–2053 (LAMP…YTLV). Basic residues predominate over residues 1732 to 1741 (KNVKSAHSTR). Residues 1773 to 1789 (HGVTVTESDSYSASLSQ) show a composition bias toward polar residues. Over residues 1977–2009 (PAPPAGTAPPAPGPTPAEPPTAPSAAPPAPSTE) the composition is skewed to pro residues. The span at 2029–2041 (EMSTSGVGRSQKQ) shows a compositional bias: polar residues.

In terms of assembly, homodimer; mediates homophilic interactions to promote cell adhesion. Detected in heart, liver, pancreas, skeletal muscle, kidney and in brain, in particular in the amygdala, caudate nucleus, corpus callosum, hippocampus, substantia nigra, thalamus and subthalamus.

The protein resides in the cell membrane. The protein localises to the synapse. In terms of biological role, cell adhesion molecule that plays a role in neuronal self-avoidance. Promotes repulsion between specific neuronal processes of either the same cell or the same subtype of cells. Promotes both isoneuronal self-avoidance for creating an orderly neurite arborization in retinal rod bipolar cells and heteroneuronal self-avoidance to maintain mosaic spacing between AII amacrine cells. Adhesion molecule that promotes lamina-specific synaptic connections in the retina: expressed in specific subsets of interneurons and retinal ganglion cells (RGCs) and promotes synaptic connectivity via homophilic interactions. The polypeptide is Cell adhesion molecule DSCAML1 (DSCAML1) (Homo sapiens (Human)).